The sequence spans 318 residues: Basic leucine zipper (bZIP) transcription factor atfB (318 aa).

Disordered stretches follow at residues 79-100 and 114-164; these read LKNT…KKLQ and FNSS…EKRE. Positions 160-199 are basic motif; it reads REKREKFLERNRLAASKCRQKKKEHTKLLETRFREVSSKK. Residues 160–223 enclose the bZIP domain; it reads REKREKFLER…LNLKNEMLRH (64 aa). Residues 202 to 216 are leucine-zipper; sequence LESEIEHLRSEVLNL. The disordered stretch occupies residues 247–304; it reads TPNRDLVSPMRSPEQMTASTPHGLSFGFDGPMQLPSEMGSPLDQRRDSEQSIMTESSY.

This sequence belongs to the bZIP family. ATF subfamily.

It localises to the nucleus. In terms of biological role, transcription factor that acts as a key player in the regulatory circuit that integrates secondary metabolism and cellular response to oxidative stress. Regulates the genes involved in development, stress response, and secondary metabolism through direct binding to their promoters. Particularly involved in the resistance to oxidative stress in asexual conidiospores. Binds aflatoxin gene promoters carrying the cAMP-response element (CRE1) under aflatoxin-inducing conditions. The chain is Basic leucine zipper (bZIP) transcription factor atfB from Aspergillus parasiticus (strain ATCC 56775 / NRRL 5862 / SRRC 143 / SU-1).